The chain runs to 217 residues: MFFRMLKEDIDTVFDQDPAARSYFEVILTYSGLHAIWAHRIAHALYKRKFYFLARLISQVSRFFTGIEIHPGATIGRRFFIDHGMGVVIGETCEIGNNVTVFQGVTLGGTGKEKGKRHPTIKDDALIATGAKVLGSITVGEGSKIGAGSVVLHDVPDFSTVVGIPGRVVVQNGKKVRRDLNHQDLPDPVADRFKSLEQQILELKAELEDRKERINQK.

It belongs to the transferase hexapeptide repeat family.

The protein resides in the cytoplasm. It carries out the reaction L-serine + acetyl-CoA = O-acetyl-L-serine + CoA. The protein operates within amino-acid biosynthesis; L-cysteine biosynthesis; L-cysteine from L-serine: step 1/2. With respect to regulation, inhibited by cysteine. In terms of biological role, catalyzes the acetylation of serine by acetyl-CoA to produce O-acetylserine (OAS). This chain is Serine acetyltransferase (cysE), found in Bacillus subtilis (strain 168).